We begin with the raw amino-acid sequence, 252 residues long: Hydroxyacylglutathione hydrolase (252 aa).

7 residues coordinate Zn(2+): H54, H56, D58, H59, H113, D132, and H170.

It belongs to the metallo-beta-lactamase superfamily. Glyoxalase II family. As to quaternary structure, monomer. Zn(2+) serves as cofactor.

It carries out the reaction an S-(2-hydroxyacyl)glutathione + H2O = a 2-hydroxy carboxylate + glutathione + H(+). The protein operates within secondary metabolite metabolism; methylglyoxal degradation; (R)-lactate from methylglyoxal: step 2/2. Thiolesterase that catalyzes the hydrolysis of S-D-lactoyl-glutathione to form glutathione and D-lactic acid. This Synechococcus sp. (strain JA-2-3B'a(2-13)) (Cyanobacteria bacterium Yellowstone B-Prime) protein is Hydroxyacylglutathione hydrolase.